The following is a 661-amino-acid chain: Polyadenylate-binding protein, cytoplasmic and nuclear (661 aa).

The segment covering 1 to 11 (MSAAETNQVQE) has biased composition (polar residues). The disordered stretch occupies residues 1–61 (MSAAETNQVQ…SAEEQGESSG (61 aa)). Over residues 20–51 (SSSSPAAGGATTATTTNNAESSDATSSSVPAD) the composition is skewed to low complexity. 4 RRM domains span residues 67–145 (ASLY…WSQR), 155–232 (GNIF…KHVS), 248–325 (TNIY…RAQK), and 351–428 (VNLF…LAQR). The disordered stretch occupies residues 473–563 (FPPNGRGNAP…PNRPAGGNVP (91 aa)). A compositionally biased stretch (pro residues) spans 501–511 (EQWPRPGPNGQ). The span at 523-532 (QDFNGQNMRP) shows a compositional bias: polar residues. Low complexity predominate over residues 533-549 (QQQQQQQQQQQQQQQQQ). The PABC domain maps to 563-644 (PAKDLAALIA…ALNAFEEYKN (82 aa)).

The protein belongs to the polyadenylate-binding protein type-1 family.

The protein resides in the cytoplasm. Its subcellular location is the nucleus. Functionally, binds the poly(A) tail of mRNA. Appears to be an important mediator of the multiple roles of the poly(A) tail in mRNA biogenesis, stability and translation. In the nucleus, involved in both mRNA cleavage and polyadenylation. Is also required for efficient mRNA export to the cytoplasm. Acts in concert with a poly(A)-specific nuclease (PAN) to affect poly(A) tail shortening, which may occur concomitantly with either nucleocytoplasmic mRNA transport or translational initiation. In the cytoplasm, stimulates translation initiation and regulates mRNA decay through translation termination-coupled poly(A) shortening, probably mediated by PAN. The sequence is that of Polyadenylate-binding protein, cytoplasmic and nuclear (PAB1) from Lodderomyces elongisporus (strain ATCC 11503 / CBS 2605 / JCM 1781 / NBRC 1676 / NRRL YB-4239) (Yeast).